Here is a 442-residue protein sequence, read N- to C-terminus: uncharacterized protein (442 aa).

Positions 1 to 23 (MEILLIVLGAVVAGLLCPVQTAA) are cleaved as a signal peptide. 2 disordered regions span residues 36–67 (TSISIHHGTRTPTSSGELSQSTFSSSSTNSSD) and 91–115 (ANETTLSGNATATETSREPQPTNTR). The span at 48–67 (TSSGELSQSTFSSSSTNSSD) shows a compositional bias: low complexity. Asparagine 64, asparagine 92, asparagine 99, asparagine 130, asparagine 174, asparagine 225, asparagine 244, asparagine 346, asparagine 363, asparagine 386, and asparagine 398 each carry an N-linked (GlcNAc...) asparagine glycan.

It localises to the secreted. This is an uncharacterized protein from Arthroderma benhamiae (strain ATCC MYA-4681 / CBS 112371) (Trichophyton mentagrophytes).